We begin with the raw amino-acid sequence, 103 residues long: UPF0102 protein aq_041 (103 aa).

The protein belongs to the UPF0102 family.

This Aquifex aeolicus (strain VF5) protein is UPF0102 protein aq_041.